We begin with the raw amino-acid sequence, 657 residues long: MTQLAIGKPAPLGAHYDGQGVNFTLFSAHAERVELCVFDANGQEHRYDLPGNSGDIWHGYLPDARPGLRYGYRVHGPWQPAEGHRFNPAKLLIDPCARQIDGEFKDNPLLHAGHNEPDYRDNAAIAPKCVVVVDHYDWEDDAPPRTPWGSTIIYEAHVKGLTYLHPEIPVEIRGTYKALGHPVMINYLKQLGITALELLPVAQFASEPRLQRMGLSNYWGYNPVAMFALHPAYACSPETALDEFRDAIKALHKAGIEVILDIVLNHSAELDLDGPLFSLRGIDNRSYYWIREDGDYHNWTGCGNTLNLSHPAVVDYASACLRYWVETCHVDGFRFDLAAVMGRTPEFRQDAPLFTAIQNCPVLSQVKLIAEPWDIAPSGYQVGNFPPLFAEWNDHFRDAARRFWLHYDLPLGAFAGRFAASSDVFKRNGRLPSAAINLVTAHDGFTLRDCVCFNHKHNEANGEENRDGTNNNYSNNHGKEGLGGTLDLVERRRDSIHALLTTLLLSQGTPMLLAGDEHGHSQHGNNNAYCQDNQLNWLDWSQASSGLTAFTAALIHLRKRIPALVENRWWEEGDGNVRWLNRYAQPLSTDEWQNGPKQLQILLSDRFLIAINATLEVTEIVLPAGEWHAIPPFAGEDNPVITVVWQGPAHGLCVFQR.

D336 serves as the catalytic Nucleophile. E371 serves as the catalytic Proton donor. The segment at A460–K479 is disordered.

Belongs to the glycosyl hydrolase 13 family.

The catalysed reaction is Hydrolysis of (1-&gt;6)-alpha-D-glucosidic linkages to branches with degrees of polymerization of three or four glucose residues in limit dextrin.. The protein operates within glycan degradation; glycogen degradation. Its function is as follows. Removes maltotriose and maltotetraose chains that are attached by 1,6-alpha-linkage to the limit dextrin main chain, generating a debranched limit dextrin. In Shigella flexneri serotype 5b (strain 8401), this protein is Glycogen debranching enzyme.